Here is a 115-residue protein sequence, read N- to C-terminus: Phosphorelay protein LuxU (115 aa).

One can recognise an HPt domain in the interval 17–107 (GADNVPVLLE…DRLHQTQQAY (91 aa)). Position 56 is a phosphohistidine (His56).

In terms of assembly, monomer.

In terms of biological role, phosphorelay protein which receives a sensory signal from a sensor kinase and transmit it to LuxO. At low cell density, a phosphoryl group is transferred from the sensor kinase, probably on His-56 and this phosphoryl group is further transferred to LuxO. The sequence is that of Phosphorelay protein LuxU (luxU) from Vibrio vulnificus (strain CMCP6).